The primary structure comprises 440 residues: Histidinol dehydrogenase (440 aa).

NAD(+)-binding residues include tyrosine 139, glutamine 201, and asparagine 224. Residues serine 247, glutamine 269, and histidine 272 each coordinate substrate. The Zn(2+) site is built by glutamine 269 and histidine 272. Catalysis depends on proton acceptor residues glutamate 337 and histidine 338. Residues histidine 338, aspartate 371, glutamate 425, and histidine 430 each coordinate substrate. A Zn(2+)-binding site is contributed by aspartate 371. Histidine 430 serves as a coordination point for Zn(2+).

This sequence belongs to the histidinol dehydrogenase family. Zn(2+) is required as a cofactor.

It catalyses the reaction L-histidinol + 2 NAD(+) + H2O = L-histidine + 2 NADH + 3 H(+). It functions in the pathway amino-acid biosynthesis; L-histidine biosynthesis; L-histidine from 5-phospho-alpha-D-ribose 1-diphosphate: step 9/9. Catalyzes the sequential NAD-dependent oxidations of L-histidinol to L-histidinaldehyde and then to L-histidine. This is Histidinol dehydrogenase from Prochlorococcus marinus (strain MIT 9312).